A 301-amino-acid chain; its full sequence is Homoserine kinase (301 aa).

Residue 86–96 participates in ATP binding; it reads PLARGLGSSAT.

It belongs to the GHMP kinase family. Homoserine kinase subfamily.

It is found in the cytoplasm. The catalysed reaction is L-homoserine + ATP = O-phospho-L-homoserine + ADP + H(+). It participates in amino-acid biosynthesis; L-threonine biosynthesis; L-threonine from L-aspartate: step 4/5. In terms of biological role, catalyzes the ATP-dependent phosphorylation of L-homoserine to L-homoserine phosphate. This Thermosynechococcus vestitus (strain NIES-2133 / IAM M-273 / BP-1) protein is Homoserine kinase.